The chain runs to 89 residues: Small ribosomal subunit protein uS14A (89 aa).

The protein belongs to the universal ribosomal protein uS14 family. As to quaternary structure, part of the 30S ribosomal subunit. Contacts proteins S3 and S10.

Binds 16S rRNA, required for the assembly of 30S particles and may also be responsible for determining the conformation of the 16S rRNA at the A site. This Staphylococcus haemolyticus (strain JCSC1435) protein is Small ribosomal subunit protein uS14A.